Reading from the N-terminus, the 488-residue chain is MKYSDLRDFIAQLESRELLKRIDYPVSPHLEMTVVSDKVLRSGGPALLFTNTPNYNMPVLTNLFGTVERVALGMGEESIVALREIGKLLAALKEPDPPKGFKDAFSKLPLLKQALNMAPKYVSGAECQTHVWEKDEVDLTLLPIQTCWPGDVAPLITWGLVTTRGPHQSRENMGIYRQQLLSKNKLIMRWLSHRGGALDYQAWQQEYPQERFPVAVTLGADPATILAAVTPVPDTLSEYAFAGLLRGQRTRLTRCIGNDLHVPASAEIVLEGYLEPGNEAPEGPYGDHTGYYNEVQSFPVFTVERITHRDKPIYHSTYTGRPPDEPAILGVALNEVFIPLLQKQFPEIVDFYLPPEGCSYRLAVVTIKKQYPGHAKRIMMAVWSFLRQFMYTKFVIVCDDDVDARNWQDVIWAMTTRMDPSRDTVMVENTPIDYLDFASPVSGLGSKMGMDATSKWPGETQREWGKPITMDEDVLNRVNGYWSLLGLK.

Asn172 is a binding site for Mn(2+). Residues 175-177 (IYR), 189-191 (RWL), and 194-195 (RG) each bind prenylated FMN. Mn(2+) is bound at residue Glu238. The Proton donor role is filled by Asp287.

The protein belongs to the UbiD family. As to quaternary structure, homohexamer. The cofactor is prenylated FMN. Mn(2+) serves as cofactor.

The protein localises to the cell membrane. It catalyses the reaction a 4-hydroxy-3-(all-trans-polyprenyl)benzoate + H(+) = a 2-(all-trans-polyprenyl)phenol + CO2. Its pathway is cofactor biosynthesis; ubiquinone biosynthesis. In terms of biological role, catalyzes the decarboxylation of 3-octaprenyl-4-hydroxy benzoate to 2-octaprenylphenol, an intermediate step in ubiquinone biosynthesis. This Legionella pneumophila (strain Corby) protein is 3-octaprenyl-4-hydroxybenzoate carboxy-lyase.